The sequence spans 127 residues: Nuclear transport factor 2 (127 aa).

Lysine 4 bears the N6-acetyllysine mark. The NTF2 domain maps to 10–121 (IGSSFIQHYY…WVCTNDMFRL (112 aa)).

As to quaternary structure, homodimer. Interacts with RAN (GDP-bound form); the interaction is direct and regulates RAN nuclear import. Interacts with the nucleoporins NUP54, NUP58 and NUP62 (via FG repeats); recruits NUTF2 to the nuclear pore complex a step required for NUTF2-mediated GDP-bound RAN nuclear import. Interacts with CAPG; mediates its nuclear import.

It localises to the cytoplasm. Its subcellular location is the cytosol. It is found in the nucleus outer membrane. The protein resides in the nucleus. The protein localises to the nuclear pore complex. It localises to the nucleus inner membrane. Its subcellular location is the nucleoplasm. Functionally, mediates the import of GDP-bound RAN from the cytoplasm into the nucleus which is essential for the function of RAN in cargo receptor-mediated nucleocytoplasmic transport. Thereby, plays indirectly a more general role in cargo receptor-mediated nucleocytoplasmic transport. Interacts with GDP-bound RAN in the cytosol, recruits it to the nuclear pore complex via its interaction with nucleoporins and promotes its nuclear import. This chain is Nuclear transport factor 2, found in Bos taurus (Bovine).